The following is a 424-amino-acid chain: UPF0761 membrane protein Smlt0865 (424 aa).

The next 6 helical transmembrane spans lie at 48 to 68, 101 to 121, 144 to 164, 181 to 201, 216 to 236, and 251 to 271; these read VFALVPLAIVVFGVLSAFPVF, SAGQLTAAGFIALVVSLLITL, FLVYWTVLTLGAMLAAASLAV, WLAELALRLAPILIEFVCITL, AVPGAILAAVILELVKWGIGA, and VAFVPILLLWIYLCWVAVLLG.

The protein belongs to the UPF0761 family.

The protein localises to the cell inner membrane. The chain is UPF0761 membrane protein Smlt0865 from Stenotrophomonas maltophilia (strain K279a).